We begin with the raw amino-acid sequence, 303 residues long: Proteasome subunit beta (303 aa).

Positions 1–64 are cleaved as a propeptide — removed in mature form; by autocatalysis; the sequence is MTWPDRDTSA…VTPSDAVPHG (64 aa). Residue Thr65 is the Nucleophile of the active site.

It belongs to the peptidase T1B family. The 20S proteasome core is composed of 14 alpha and 14 beta subunits that assemble into four stacked heptameric rings, resulting in a barrel-shaped structure. The two inner rings, each composed of seven catalytic beta subunits, are sandwiched by two outer rings, each composed of seven alpha subunits. The catalytic chamber with the active sites is on the inside of the barrel. Has a gated structure, the ends of the cylinder being occluded by the N-termini of the alpha-subunits. Is capped by the proteasome-associated ATPase, ARC.

It is found in the cytoplasm. It carries out the reaction Cleavage of peptide bonds with very broad specificity.. It participates in protein degradation; proteasomal Pup-dependent pathway. With respect to regulation, the formation of the proteasomal ATPase ARC-20S proteasome complex, likely via the docking of the C-termini of ARC into the intersubunit pockets in the alpha-rings, may trigger opening of the gate for substrate entry. Interconversion between the open-gate and close-gate conformations leads to a dynamic regulation of the 20S proteasome proteolysis activity. In terms of biological role, component of the proteasome core, a large protease complex with broad specificity involved in protein degradation. This Mycolicibacterium gilvum (strain PYR-GCK) (Mycobacterium gilvum (strain PYR-GCK)) protein is Proteasome subunit beta.